A 564-amino-acid polypeptide reads, in one-letter code: E3 ubiquitin-protein ligase TRIM16 (564 aa).

The segment at 1–70 is disordered; the sequence is MAELDLMAPG…DPAEQGDPAG (70 aa). Positions 24 to 39 are enriched in low complexity; the sequence is SPDSGSPSPDSGSASP. 2 consecutive B box-type zinc fingers follow at residues 72 to 122 and 126 to 165; these read GKEV…LTEP and HNWR…IVSL. S116 bears the Phosphoserine mark. Residues C131, H134, C153, and H157 each coordinate Zn(2+). Coiled coils occupy residues 165-203, 243-274, and 320-340; these read LDAA…NQKS, AALS…RMAA, and HLIQ…KEEE. The residue at position 203 (S203) is a Phosphoserine. A B30.2/SPRY domain is found at 355–553; the sequence is YWTSKPEPST…RIVDLGEEPE (199 aa).

This sequence belongs to the TRIM/RBCC family. As to quaternary structure, homodimerizes via its coiled-coil domain. Heterodimerizes with MID1, TRIM24 and PML. Interacts with Galectin-3/LGALS3 in a ULK1-dependent manner; this interaction mediates autophagy of damage endomembranes. Interacts with BECN1. Interacts with ATG16L1. Interacts with p62/SQSTM and LC3B/MAP1LC3B. Post-translationally, phosphorylated by ULK1. In terms of processing, auto-ubiquitinates via its B-Boxes.

It is found in the cytoplasm. It catalyses the reaction S-ubiquitinyl-[E2 ubiquitin-conjugating enzyme]-L-cysteine + [acceptor protein]-L-lysine = [E2 ubiquitin-conjugating enzyme]-L-cysteine + N(6)-ubiquitinyl-[acceptor protein]-L-lysine.. Functionally, E3 ubiquitin ligase that plays an essential role in the organization of autophagic response and ubiquitination upon lysosomal and phagosomal damages. Plays a role in the stress-induced biogenesis and degradation of protein aggresomes by regulating the p62-KEAP1-NRF2 signaling and particularly by modulating the ubiquitination levels and thus stability of NRF2. Acts as a scaffold protein and facilitates autophagic degradation of protein aggregates by interacting with p62/SQSTM, ATG16L1 and LC3B/MAP1LC3B. In turn, protects the cell against oxidative stress-induced cell death as a consequence of endomembrane damage. This Pongo abelii (Sumatran orangutan) protein is E3 ubiquitin-protein ligase TRIM16 (TRIM16).